Reading from the N-terminus, the 370-residue chain is tRNA-specific 2-thiouridylase MnmA (370 aa).

ATP-binding positions include 19–26 (AMSGGVDS) and L45. C113 (nucleophile) is an active-site residue. C113 and C209 are joined by a disulfide. ATP is bound at residue G137. Residues 159-161 (RDQ) form an interaction with tRNA region. Residue C209 is the Cysteine persulfide intermediate of the active site.

The protein belongs to the MnmA/TRMU family.

The protein localises to the cytoplasm. It catalyses the reaction S-sulfanyl-L-cysteinyl-[protein] + uridine(34) in tRNA + AH2 + ATP = 2-thiouridine(34) in tRNA + L-cysteinyl-[protein] + A + AMP + diphosphate + H(+). Its function is as follows. Catalyzes the 2-thiolation of uridine at the wobble position (U34) of tRNA, leading to the formation of s(2)U34. This Zymomonas mobilis subsp. mobilis (strain ATCC 31821 / ZM4 / CP4) protein is tRNA-specific 2-thiouridylase MnmA.